A 377-amino-acid polypeptide reads, in one-letter code: Queuine tRNA-ribosyltransferase (377 aa).

The Proton acceptor role is filled by D93. Residues 93-97 (DSGGF), D147, Q190, and G216 each bind substrate. The segment at 247-253 (GVGTPDD) is RNA binding. D266 (nucleophile) is an active-site residue. The segment at 271 to 275 (TRAGR) is RNA binding; important for wobble base 34 recognition. Zn(2+) is bound by residues C304, C306, C309, and H335.

Belongs to the queuine tRNA-ribosyltransferase family. In terms of assembly, homodimer. Within each dimer, one monomer is responsible for RNA recognition and catalysis, while the other monomer binds to the replacement base PreQ1. The cofactor is Zn(2+).

The enzyme catalyses 7-aminomethyl-7-carbaguanine + guanosine(34) in tRNA = 7-aminomethyl-7-carbaguanosine(34) in tRNA + guanine. The protein operates within tRNA modification; tRNA-queuosine biosynthesis. In terms of biological role, catalyzes the base-exchange of a guanine (G) residue with the queuine precursor 7-aminomethyl-7-deazaguanine (PreQ1) at position 34 (anticodon wobble position) in tRNAs with GU(N) anticodons (tRNA-Asp, -Asn, -His and -Tyr). Catalysis occurs through a double-displacement mechanism. The nucleophile active site attacks the C1' of nucleotide 34 to detach the guanine base from the RNA, forming a covalent enzyme-RNA intermediate. The proton acceptor active site deprotonates the incoming PreQ1, allowing a nucleophilic attack on the C1' of the ribose to form the product. After dissociation, two additional enzymatic reactions on the tRNA convert PreQ1 to queuine (Q), resulting in the hypermodified nucleoside queuosine (7-(((4,5-cis-dihydroxy-2-cyclopenten-1-yl)amino)methyl)-7-deazaguanosine). In Granulibacter bethesdensis (strain ATCC BAA-1260 / CGDNIH1), this protein is Queuine tRNA-ribosyltransferase.